A 1925-amino-acid chain; its full sequence is MANLKPNTLHVDNLSPRQRSLSSGLSSACSSGSVSPVPIIPIISISRDGEESETESEIEPEPARIFHRRMSTHSKRNNNLSAIIREGYLMKHTWSFQRWRRRYFRLKRSYLYYAKDAKCDVFDEIDLSELCYFECSIKNVNHSFQIITPTRSLVLCADSRREMEDWLGSLKTATAPQRPRGDSFLIDQHDILSNHHHWYATSHARPTYCNVCRDALSGVTSHGLSCEVCKCKVHKRCAAKAIANCKWTTLATVGKDIIEQPDGSLIMPHQWMEGNLPVSAVCAVCKKTCGSVLRLQDWRCLWCRDTVHVACRPQMPIVCPIGPAKLSVVPPTSVHSISTDDAWDVVSPKGNFSPLLVFVNSKSGDNQGVKFLRRFKQLLNPAQVFDLISTGPSLGLRLFRHFEMFRILVCSGDGSVGWVLSEIDRFNMHKQCQVAVMPLGTGNDLARVLGWGSSCDDDTHLPQILERYESASTKMLDRWSIMVFEKAITVPKMPKMSITTEQEALLTGMVTSANHHLRFIVETNDTQTLISSTRSLCDTVDELVSRICEHHKDDEQLAMKCDILRQKLTMLLDALQEEELGTHSGDDLVATIRSLISRSGPLTTARPSFLNPNISIEKTEKDNINSKERRNSRSLRSSEKEALQCRANSVKRAIYNVVEHSEPGRPKRYQRKLSITPFEALKIPITNSGDSTPCGSPLPIIPPINIISPTMETSRLTCISPLPDTRRDSVDENFFNSINLPAPRQFADSRRSSGVPEVIQEMEEGASGETVYRVGRLSLSGGANIDDAGNRLSPSSEAGENTPTERKVDFLRVPIMTSEPIVDPLSNYRPIEVFERTYYMAREMDKDKERTASGQVESEKEEADVNEKSEPQEPHRALVHTCNLQVPGIVVTPQSQNVYTSENFTIIDTDAQTNTEQSSSEDLGGEASDVLSAISNEECSVASEIFDKPESGHSLGDIIQNLDANNFTHIDSPETSDETEPMPGESLMDDISSVLGHDITNALQDNTITDDTTTLCSEHAGPTKPPRKKSLSALVQSKTHPRRRNSSPPRKAGLARMDSDDNPQQFGFENIVFEIDNRCDDQKIREPPRYCSLAQFVEGNDIARQSFKQLMLDRNSGDNHNDNGKNEEADTPTNSAPTRTYRNLTTTTTSDELETAIKIEINNATTNTTTSTSSSISTTTTTSTTSTVKPLESAMASSTSPTKKSGHGQEISVVVRPPTPLRGDSVKPTASSASSASLLATSSSLLGVRTLNSSEIRRHSSHAPSLAVRDYDKDKDRRHSGFNPNFLTLDPEHARFLSSSPAASRRISCGSLFKKRNQKLNVKRTYGLFSVRFFVVAEPDIRLATLALIRPLIPLPNEALPNLQTLKGSKSSLFMGSTLFGFEHFSAGDKDEKPGKDKERTPTEETNRKLPIINPIVRLPNWPNLANGTGFISKCLMANADTLCAAVSPLMDPDETLLAGYHEKCVMNNYFGIGIDAKISLDFHNKREEHPEKCRSRARNYMWYGVLGSKQLLQKTCKNLEQRVQLECDGQRIPLPELQGIVILNIPSFMGGTNFWGNSSKKEDIFLPPSFDDRVLEVVAVFGSVQMAASRLINLQHHRIAQCQSVQINILGDEEIPIQVDGEAWLQPPGMIRILHKNRVQMLCRNRSLEVSLKTWQEKQRQHSISIQRDTSSTASEHAVSTDEVISERECYVLLNFIEAVSSLVKWVKFLIISHPALQHDLYEVACRASEALESIHPQGKLLEGPSLRTKLVEVIDSSRQLYDDACTLLRDRGHSLILREDLETKLSAALANMEMELKKCSVQKCIDGKLRAYFNVLAPNEEPDGRRKSRPFWVRLRSGSTAGQQQFKPPITNTREAANNWSVNEVVTWLETMQLSEYVDSFLKNDIRGKELLTLGRRDLKDLGVVKVGHVKRILQAIKDLSEN.

One can recognise a PH domain in the interval 82–175 (AIIREGYLMK…WLGSLKTATA (94 aa)). 2 consecutive Phorbol-ester/DAG-type zinc fingers follow at residues 195–245 (HHHW…IANC) and 268–319 (PHQW…PIVC). A DAGKc domain is found at 350-486 (GNFSPLLVFV…DRWSIMVFEK (137 aa)). 8 disordered regions span residues 620-641 (EKDNINSKERRNSRSLRSSEKE), 783-805 (ANIDDAGNRLSPSSEAGENTPTE), 847-872 (DKERTASGQVESEKEEADVNEKSEPQ), 1013-1065 (TTLC…NPQQ), 1113-1141 (DRNSGDNHNDNGKNEEADTPTNSAPTRTY), 1167-1234 (NTTT…SSAS), 1256-1276 (IRRHSSHAPSLAVRDYDKDKD), and 1385-1405 (FSAGDKDEKPGKDKERTPTEE). A compositionally biased stretch (polar residues) spans 792–802 (LSPSSEAGENT). Over residues 863–872 (ADVNEKSEPQ) the composition is skewed to basic and acidic residues. Residues 1115–1128 (NSGDNHNDNGKNEE) show a composition bias toward basic and acidic residues. The span at 1167–1187 (NTTTSTSSSISTTTTTSTTST) shows a compositional bias: low complexity. Residues 1386–1405 (SAGDKDEKPGKDKERTPTEE) are compositionally biased toward basic and acidic residues. An SAM domain is found at 1862 to 1925 (WSVNEVVTWL…LQAIKDLSEN (64 aa)).

Belongs to the eukaryotic diacylglycerol kinase family.

The protein localises to the cytoplasm. It carries out the reaction a 1,2-diacyl-sn-glycerol + ATP = a 1,2-diacyl-sn-glycero-3-phosphate + ADP + H(+). In terms of biological role, phosphorylates diacylglycerol (DAG) to generate phosphatidic acid (PA). The polypeptide is Diacylglycerol kinase eta (Drosophila mojavensis (Fruit fly)).